The chain runs to 192 residues: uncharacterized protein (192 aa).

Positions 17–73 (MLRGSGKKPIQRLAKAPAATASSKTSEWRATTAYGFLPAGGDVRPHSPRYESQGVLS) are disordered. The segment covering 30–41 (AKAPAATASSKT) has biased composition (low complexity).

This is an uncharacterized protein from Sinorhizobium fredii (strain NBRC 101917 / NGR234).